Here is a 217-residue protein sequence, read N- to C-terminus: Adenylate kinase (217 aa).

11–16 lines the ATP pocket; the sequence is GAGKGT. An NMP region spans residues 31-60; the sequence is STGDMFREAMANETPVGLEAKSYIDKGNLV. Residues T32, R37, 58–60, 86–89, and Q93 each bind AMP; these read NLV and GFPR. The segment at 127–165 is LID; sequence ARYICKKCGATYNKISNPTKVEGTCDRCGGHEFFQREDD. R128 serves as a coordination point for ATP. Zn(2+) is bound by residues C131 and C134. 137–138 is an ATP binding site; sequence TY. The Zn(2+) site is built by C151 and C154. AMP is bound by residues R162 and R173. Residue Q201 coordinates ATP.

The protein belongs to the adenylate kinase family. As to quaternary structure, monomer.

Its subcellular location is the cytoplasm. It carries out the reaction AMP + ATP = 2 ADP. It participates in purine metabolism; AMP biosynthesis via salvage pathway; AMP from ADP: step 1/1. In terms of biological role, catalyzes the reversible transfer of the terminal phosphate group between ATP and AMP. Plays an important role in cellular energy homeostasis and in adenine nucleotide metabolism. The sequence is that of Adenylate kinase from Lactobacillus johnsonii (strain CNCM I-12250 / La1 / NCC 533).